A 496-amino-acid polypeptide reads, in one-letter code: Cytochrome P450 71D178 (496 aa).

Residues 1–21 (MDISISWVVIILLVLSYLILM) traverse the membrane as a helical; Signal-anchor for type II membrane protein segment. Cys435 serves as a coordination point for heme.

This sequence belongs to the cytochrome P450 family. It depends on heme as a cofactor. In terms of tissue distribution, expressed in flowers, leaves and stems, especially in glandular trichomes.

The protein localises to the membrane. It carries out the reaction (4S)-limonene + reduced [NADPH--hemoprotein reductase] + O2 = (1S,5R)-carveol + oxidized [NADPH--hemoprotein reductase] + H2O + H(+). The catalysed reaction is gamma-terpinene + 2 reduced [NADPH--hemoprotein reductase] + 2 O2 = carvacrol + 2 oxidized [NADPH--hemoprotein reductase] + 3 H2O + 2 H(+). It catalyses the reaction gamma-terpinene + 2 reduced [NADPH--hemoprotein reductase] + 2 O2 = thymol + 2 oxidized [NADPH--hemoprotein reductase] + 3 H2O + 2 H(+). The enzyme catalyses (4R)-limonene + reduced [NADPH--hemoprotein reductase] + O2 = (1R,6S)-isopiperitenol + oxidized [NADPH--hemoprotein reductase] + H2O + H(+). It functions in the pathway secondary metabolite biosynthesis; terpenoid biosynthesis. Involved in the biosynthesis of phenolic monoterpenes natural products thymol and carvacrol which have a broad range of biological activities acting as antimicrobial compounds, insecticides, antioxidants and pharmaceutical agents. Catalyzes the C2- and C3-hydroxylation of gamma-terpinene to produce carvacrol and thymol, respectively. Also mediates the C6-hydroxylation of (4S)-limonene to form carveol and the C3-hydroxylation of (4R)-limonene to generate (+)-trans-isopiperitenol. The sequence is that of Cytochrome P450 71D178 from Origanum vulgare (Wild marjoram).